A 429-amino-acid chain; its full sequence is Putative chloride channel protein ClcB-like (429 aa).

11 helical membrane-spanning segments follow: residues 1–21 (MLAI…AFRE), 44–64 (LPWW…GLTL), 146–166 (LLVA…PIAG), 168–188 (VFVC…PLLV), 200–220 (FFGY…GWEV), 221–241 (LTYL…LGLI), 259–279 (LALG…VWGN), 283–303 (VVNG…VLVC), 315–335 (GAVG…GLLY), 354–376 (AVVG…ILMI), and 383–405 (YQVV…ATGA).

This sequence belongs to the chloride channel (TC 2.A.49) family. ClcB subfamily.

The protein resides in the cell inner membrane. The protein is Putative chloride channel protein ClcB-like of Ralstonia nicotianae (strain ATCC BAA-1114 / GMI1000) (Ralstonia solanacearum).